A 367-amino-acid chain; its full sequence is Phosphoribosylaminoimidazole-succinocarboxamide synthase (367 aa).

The protein belongs to the SAICAR synthetase family.

The catalysed reaction is 5-amino-1-(5-phospho-D-ribosyl)imidazole-4-carboxylate + L-aspartate + ATP = (2S)-2-[5-amino-1-(5-phospho-beta-D-ribosyl)imidazole-4-carboxamido]succinate + ADP + phosphate + 2 H(+). Its pathway is purine metabolism; IMP biosynthesis via de novo pathway; 5-amino-1-(5-phospho-D-ribosyl)imidazole-4-carboxamide from 5-amino-1-(5-phospho-D-ribosyl)imidazole-4-carboxylate: step 1/2. The sequence is that of Phosphoribosylaminoimidazole-succinocarboxamide synthase from Shewanella sp. (strain ANA-3).